The sequence spans 332 residues: Biotin synthase (332 aa).

Residues 53–282 (HFGKKVKLNM…TKEIRISGGR (230 aa)) enclose the Radical SAM core domain. Cys-71, Cys-75, and Cys-78 together coordinate [4Fe-4S] cluster. Residues Cys-115, Cys-147, Cys-207, and Arg-277 each contribute to the [2Fe-2S] cluster site.

Belongs to the radical SAM superfamily. Biotin synthase family. Homodimer. Requires [4Fe-4S] cluster as cofactor. It depends on [2Fe-2S] cluster as a cofactor.

It catalyses the reaction (4R,5S)-dethiobiotin + (sulfur carrier)-SH + 2 reduced [2Fe-2S]-[ferredoxin] + 2 S-adenosyl-L-methionine = (sulfur carrier)-H + biotin + 2 5'-deoxyadenosine + 2 L-methionine + 2 oxidized [2Fe-2S]-[ferredoxin]. It participates in cofactor biosynthesis; biotin biosynthesis; biotin from 7,8-diaminononanoate: step 2/2. Its function is as follows. Catalyzes the conversion of dethiobiotin (DTB) to biotin by the insertion of a sulfur atom into dethiobiotin via a radical-based mechanism. The chain is Biotin synthase from Bacillus cereus (strain G9842).